The following is a 1078-amino-acid chain: Teashirt homolog 1-A (1078 aa).

Disordered regions lie at residues 1–110, 140–197, and 271–300; these read MPRR…NVSY, KSNE…SNSA, and GHYR…MEME. Positions 26–36 are enriched in acidic residues; it reads IEEDNLEDDGL. Residues 57–71 show a composition bias toward polar residues; it reads PSYQNSPISSATNQD. The segment covering 143–197 has biased composition (low complexity); sequence ENSSPTTNTNKSSMSEATGSTSDPDTPTTIPSSSCTNTSTSISVTTSNSTNSNSA. 2 consecutive C2H2-type zinc fingers follow at residues 248-272 and 309-333; these read FKCK…ETGH and LKCM…KTKH. Residues 271-286 are compositionally biased toward basic and acidic residues; that stretch reads GHYRDDNKDRDAERTK. The segment at 365–394 is disordered; the sequence is DSPEQAGISPGASVSESAKDPKAANPYVTP. The segment at 418-442 adopts a C2H2-type 3 zinc-finger fold; the sequence is LKCMECGSSHDSLQQLTAHMMVTGH. 2 disordered regions span residues 472–524 and 850–877; these read LPPT…ENED and RLTP…EAMD. Basic and acidic residues predominate over residues 497–524; sequence HSEEKKDPEKEKVNNCEVEKRIKEENED. Residues 853 to 862 show a composition bias toward polar residues; sequence PKSSTPSTVS. Positions 885–955 form a DNA-binding region, homeobox; the sequence is RKGRQSNWNP…NVKYQLRRTG (71 aa). 2 C2H2-type zinc fingers span residues 970-992 and 1038-1061; these read FFCN…LETH and FQCK…SKTH.

Belongs to the teashirt C2H2-type zinc-finger protein family.

Its subcellular location is the nucleus. Functionally, probable transcriptional regulator involved in developmental processes. May act as a transcriptional repressor (Potential). Involved in two major neuronal regionalization processes: primary anteroposterior (AP) axis patterning of the CNS and segmentation of the cranial neuronal crest (CNS) development. The protein is Teashirt homolog 1-A (tshz1-a) of Xenopus laevis (African clawed frog).